A 725-amino-acid polypeptide reads, in one-letter code: Polyribonucleotide nucleotidyltransferase (725 aa).

Residues aspartate 488 and aspartate 494 each contribute to the Mg(2+) site. In terms of domain architecture, KH spans 555 to 614 (PRMITMKIHPDKIREVIGKGGSTIQALTKETGTTIDIQEDGTITIASTSTDGMAEAKRRI). One can recognise an S1 motif domain in the interval 624 to 692 (GKIYAGTVLK…EKGRLRLSLK (69 aa)). Residues 702 to 725 (ISPIAQGDAPAAAPAAPASPDQQQ) are disordered. Over residues 706–725 (AQGDAPAAAPAAPASPDQQQ) the composition is skewed to low complexity.

The protein belongs to the polyribonucleotide nucleotidyltransferase family. The cofactor is Mg(2+).

The protein localises to the cytoplasm. The catalysed reaction is RNA(n+1) + phosphate = RNA(n) + a ribonucleoside 5'-diphosphate. In terms of biological role, involved in mRNA degradation. Catalyzes the phosphorolysis of single-stranded polyribonucleotides processively in the 3'- to 5'-direction. The chain is Polyribonucleotide nucleotidyltransferase from Cupriavidus metallidurans (strain ATCC 43123 / DSM 2839 / NBRC 102507 / CH34) (Ralstonia metallidurans).